A 532-amino-acid chain; its full sequence is Monolignol oxidoreductase AtBBE-like 15 (532 aa).

The first 27 residues, 1 to 27 (MAFAISKRNATLFLVTLLLISVPLSSS), serve as a signal peptide directing secretion. A disulfide bond links C36 and C100. N-linked (GlcNAc...) asparagine glycosylation occurs at N57. Positions 76–254 (TPSNPKPVFI…LAWKIKLVPV (179 aa)) constitute an FAD-binding PCMH-type domain. A cross-link (6-(S-cysteinyl)-8alpha-(pros-histidyl)-FAD (His-Cys)) is located at residues 115–179 (HDYEGLSFVA…QTHGFPAGLC (65 aa)). 2 N-linked (GlcNAc...) asparagine glycosylation sites follow: N306 and N431.

This sequence belongs to the oxygen-dependent FAD-linked oxidoreductase family. FAD is required as a cofactor. The FAD cofactor is bound via a bicovalent 6-S-cysteinyl, 8alpha-N1-histidyl FAD linkage. Expressed in sepals and stamen.

The protein localises to the secreted. It localises to the cell wall. The catalysed reaction is (E)-4-coumaroyl alcohol + A = (E)-4-coumaraldehyde + AH2. It catalyses the reaction (E)-coniferol + A = (E)-coniferaldehyde + AH2. The enzyme catalyses (E)-sinapyl alcohol + A = (E)-sinapaldehyde + AH2. It carries out the reaction 4-O-(beta-D-glucosyl)-(E)-coniferol + A = 4-O-(beta-D-glucosyl)-4-(E)-coniferyl aldehyde + AH2. Required for endosperm development and polar nuclei fusion. Mediates oxidation of p-hydroxylated derivatives of cinnamyl alcohol (i.e. the monolignols p-coumaryl-, coniferyl-, and sinapyl alcohol) to their corresponding aldehydes. Can also use the beta-O-glycosylated form of coniferyl alcohol (coniferin) as substrate, but is much less efficient towards cinnamyl alcohol. The electron acceptor required for these reactions is not known, but does not seem to be dioxygen. The protein is Monolignol oxidoreductase AtBBE-like 15 of Arabidopsis thaliana (Mouse-ear cress).